The following is a 38-amino-acid chain: Photosystem II reaction center protein L (38 aa).

Residues 17–37 (SLYWGLLLIFVLAVSFSNYFF) traverse the membrane as a helical segment.

This sequence belongs to the PsbL family. PSII is composed of 1 copy each of membrane proteins PsbA, PsbB, PsbC, PsbD, PsbE, PsbF, PsbH, PsbI, PsbJ, PsbK, PsbL, PsbM, PsbT, PsbX, PsbY, PsbZ, Psb30/Ycf12, at least 3 peripheral proteins of the oxygen-evolving complex and a large number of cofactors. It forms dimeric complexes.

It localises to the plastid membrane. One of the components of the core complex of photosystem II (PSII). PSII is a light-driven water:plastoquinone oxidoreductase that uses light energy to abstract electrons from H(2)O, generating O(2) and a proton gradient subsequently used for ATP formation. It consists of a core antenna complex that captures photons, and an electron transfer chain that converts photonic excitation into a charge separation. This subunit is found at the monomer-monomer interface and is required for correct PSII assembly and/or dimerization. This is Photosystem II reaction center protein L from Aneura mirabilis (Parasitic liverwort).